Consider the following 312-residue polypeptide: Malate dehydrogenase (312 aa).

Residues 12 to 17 (GAGFTG) and aspartate 36 contribute to the NAD(+) site. Substrate is bound by residues arginine 87 and arginine 93. NAD(+)-binding positions include asparagine 100 and 123-125 (LTN). Substrate is bound at residue asparagine 125. Position 149 is a phosphoserine (serine 149). Residue arginine 156 participates in substrate binding. Histidine 180 (proton acceptor) is an active-site residue.

The protein belongs to the LDH/MDH superfamily. MDH type 3 family.

The enzyme catalyses (S)-malate + NAD(+) = oxaloacetate + NADH + H(+). Functionally, catalyzes the reversible oxidation of malate to oxaloacetate. This chain is Malate dehydrogenase, found in Geobacillus kaustophilus (strain HTA426).